We begin with the raw amino-acid sequence, 211 residues long: WUSCHEL-related homeobox 14 (211 aa).

The homeobox; WUS-type DNA-binding region spans 91–155 (STRHRWTPTS…NRRARSKRKQ (65 aa)). The tract at residues 147–183 (RRARSKRKQPQTTTANGQADDVAVTTEERRSCGDSGG) is disordered.

The protein belongs to the WUS homeobox family. In terms of tissue distribution, expressed in root vasculature, pericycle and stamen. Expressed in the procambium during stem maturation.

The protein resides in the nucleus. Its function is as follows. Acts redundantly with WOX4 downstream of the TDR/PXY receptor kinase to regulate procambial cell proliferation and differentiation in vascular tissue, independently of any role in vascular. Involved in the regulation of gibberellin (GA) biosynthesis pathway. Positively regulates the expression of the GA biosynthesis gene GA3OX1, and negatively regulates the expression of GA2OX1 during secondary growth, which increases bioactive GA content in the inflorescence stem. Promotes vascular cell differentiation in the inflorescence stem. In terms of biological role, transcription factor which may be involved in developmental processes. In Arabidopsis thaliana (Mouse-ear cress), this protein is WUSCHEL-related homeobox 14 (WOX14).